We begin with the raw amino-acid sequence, 20 residues long: ALAGTIIAGASLTFKILDEV.

Residues 1–10 (ALAGTIIAGA) form a plays an important role in the hemolytic activity region. Residues 9–20 (GASLTFKILDEV) form an N-terminal region region.

Belongs to the actinoporin family. Sea anemone subfamily. In terms of assembly, octamer or nonamer in membranes. Monomer in the soluble state.

The protein resides in the secreted. It is found in the nematocyst. Its subcellular location is the target cell membrane. Its function is as follows. Pore-forming protein that forms cations-selective hydrophilic pores of around 1 nm and causes cytolysis. Pore formation is a multi-step process that involves specific recognition of membrane sphingomyelin (but neither cholesterol nor phosphatidylcholine) using aromatic rich region and adjacent phosphocholine (POC) binding site, firm binding to the membrane (mainly driven by hydrophobic interactions) accompanied by the transfer of the N-terminal region to the lipid-water interface and finally pore formation after oligomerization of monomers. The sequence is that of Magnificalysin I from Heteractis magnifica (Magnificent sea anemone).